The primary structure comprises 766 residues: Ribonuclease Z, mitochondrial (766 aa).

The N-terminal 25 residues, 1–25 (MYLVKSAGSPIYRTLRTLTTSNLMA), are a transit peptide targeting the mitochondrion.

The protein belongs to the RNase Z family. In terms of assembly, homodimer. Requires Zn(2+) as cofactor.

The protein localises to the nucleus. The protein resides in the mitochondrion. The enzyme catalyses Endonucleolytic cleavage of RNA, removing extra 3' nucleotides from tRNA precursor, generating 3' termini of tRNAs. A 3'-hydroxy group is left at the tRNA terminus and a 5'-phosphoryl group is left at the trailer molecule.. Zinc phosphodiesterase, which displays some tRNA 3'-processing endonuclease activity of nuclear and mitochondrial pre-tRNA. Probably involved in tRNA maturation, by removing a 3'-trailer from precursor tRNA. May participate in tRNA processing in the developing embryo. This Drosophila melanogaster (Fruit fly) protein is Ribonuclease Z, mitochondrial.